Reading from the N-terminus, the 367-residue chain is Apolipoprotein A-V (367 aa).

The N-terminal stretch at Met1–Thr20 is a signal peptide. A Phosphoserine modification is found at Ser56. The segment at Leu71 to Gly90 is disordered.

The protein belongs to the apolipoprotein A1/A4/E family. As to quaternary structure, interacts with GPIHBP1. Interacts with SORL1; this interaction leads to APOA5 internalization and sorting either to lysosomes and degradation, or to the trans-Golgi network. In terms of processing, phosphorylated by FAM20C in the extracellular medium.

The protein localises to the secreted. Its subcellular location is the early endosome. The protein resides in the late endosome. It is found in the golgi apparatus. It localises to the trans-Golgi network. Minor apolipoprotein mainly associated with HDL and to a lesser extent with VLDL. May also be associated with chylomicrons. Important determinant of plasma triglyceride (TG) levels by both being a potent stimulator of apo-CII lipoprotein lipase (LPL) TG hydrolysis and an inhibitor of the hepatic VLDL-TG production rate (without affecting the VLDL-apoB production rate). Activates poorly lecithin:cholesterol acyltransferase (LCAT) and does not enhance efflux of cholesterol from macrophages. Binds heparin. This chain is Apolipoprotein A-V (APOA5), found in Leptonychotes weddellii (Weddell seal).